Here is a 242-residue protein sequence, read N- to C-terminus: 1-(5-phosphoribosyl)-5-[(5-phosphoribosylamino)methylideneamino] imidazole-4-carboxamide isomerase (242 aa).

Asp8 serves as the catalytic Proton acceptor. Asp130 (proton donor) is an active-site residue.

Belongs to the HisA/HisF family.

It localises to the cytoplasm. The catalysed reaction is 1-(5-phospho-beta-D-ribosyl)-5-[(5-phospho-beta-D-ribosylamino)methylideneamino]imidazole-4-carboxamide = 5-[(5-phospho-1-deoxy-D-ribulos-1-ylimino)methylamino]-1-(5-phospho-beta-D-ribosyl)imidazole-4-carboxamide. The protein operates within amino-acid biosynthesis; L-histidine biosynthesis; L-histidine from 5-phospho-alpha-D-ribose 1-diphosphate: step 4/9. The protein is 1-(5-phosphoribosyl)-5-[(5-phosphoribosylamino)methylideneamino] imidazole-4-carboxamide isomerase of Acidithiobacillus ferrooxidans (strain ATCC 53993 / BNL-5-31) (Leptospirillum ferrooxidans (ATCC 53993)).